The sequence spans 415 residues: Lipoyl synthase, mitochondrial (415 aa).

The transit peptide at 1–32 (MAASTNRLRFLYSSARTVPQTGSITPISRRTY) directs the protein to the mitochondrion. Polar residues predominate over residues 22 to 32 (GSITPISRRTY). Residues 22-53 (GSITPISRRTYATTEPSPSATGAPATARKRTN) are disordered. The segment covering 33–47 (ATTEPSPSATGAPAT) has biased composition (low complexity). Residues Cys-132, Cys-137, Cys-143, Cys-163, Cys-167, Cys-170, and Ser-378 each coordinate [4Fe-4S] cluster. A Radical SAM core domain is found at 146–367 (GSDKSAATAT…RQRALDMGFL (222 aa)). The disordered stretch occupies residues 395 to 415 (AAGTAGESVTDSKAAVDEATR).

This sequence belongs to the radical SAM superfamily. Lipoyl synthase family. It depends on [4Fe-4S] cluster as a cofactor.

Its subcellular location is the mitochondrion. It carries out the reaction [[Fe-S] cluster scaffold protein carrying a second [4Fe-4S](2+) cluster] + N(6)-octanoyl-L-lysyl-[protein] + 2 oxidized [2Fe-2S]-[ferredoxin] + 2 S-adenosyl-L-methionine + 4 H(+) = [[Fe-S] cluster scaffold protein] + N(6)-[(R)-dihydrolipoyl]-L-lysyl-[protein] + 4 Fe(3+) + 2 hydrogen sulfide + 2 5'-deoxyadenosine + 2 L-methionine + 2 reduced [2Fe-2S]-[ferredoxin]. Its pathway is protein modification; protein lipoylation via endogenous pathway; protein N(6)-(lipoyl)lysine from octanoyl-[acyl-carrier-protein]: step 2/2. Functionally, catalyzes the radical-mediated insertion of two sulfur atoms into the C-6 and C-8 positions of the octanoyl moiety bound to the lipoyl domains of lipoate-dependent enzymes, thereby converting the octanoylated domains into lipoylated derivatives. In Aspergillus oryzae (strain ATCC 42149 / RIB 40) (Yellow koji mold), this protein is Lipoyl synthase, mitochondrial.